Here is a 245-residue protein sequence, read N- to C-terminus: 1-(5-phosphoribosyl)-5-[(5-phosphoribosylamino)methylideneamino] imidazole-4-carboxamide isomerase (245 aa).

Aspartate 7 functions as the Proton acceptor in the catalytic mechanism. The Proton donor role is filled by aspartate 129.

Belongs to the HisA/HisF family.

The protein localises to the cytoplasm. The enzyme catalyses 1-(5-phospho-beta-D-ribosyl)-5-[(5-phospho-beta-D-ribosylamino)methylideneamino]imidazole-4-carboxamide = 5-[(5-phospho-1-deoxy-D-ribulos-1-ylimino)methylamino]-1-(5-phospho-beta-D-ribosyl)imidazole-4-carboxamide. It functions in the pathway amino-acid biosynthesis; L-histidine biosynthesis; L-histidine from 5-phospho-alpha-D-ribose 1-diphosphate: step 4/9. The sequence is that of 1-(5-phosphoribosyl)-5-[(5-phosphoribosylamino)methylideneamino] imidazole-4-carboxamide isomerase from Cronobacter sakazakii (strain ATCC BAA-894) (Enterobacter sakazakii).